Here is a 145-residue protein sequence, read N- to C-terminus: Ribosomal RNA large subunit methyltransferase H (145 aa).

Residues L64, G93, and 112-117 (LSPLTF) each bind S-adenosyl-L-methionine.

This sequence belongs to the RNA methyltransferase RlmH family. In terms of assembly, homodimer.

It is found in the cytoplasm. The catalysed reaction is pseudouridine(1915) in 23S rRNA + S-adenosyl-L-methionine = N(3)-methylpseudouridine(1915) in 23S rRNA + S-adenosyl-L-homocysteine + H(+). Specifically methylates the pseudouridine at position 1915 (m3Psi1915) in 23S rRNA. This Prochlorococcus marinus (strain NATL1A) protein is Ribosomal RNA large subunit methyltransferase H.